Reading from the N-terminus, the 111-residue chain is uncharacterized protein (111 aa).

3 helical membrane-spanning segments follow: residues 4-22, 49-71, and 91-108; these read FWILMLIAITISLASQFFI, LLILFVFSLSFFPVEYLLLLFFI, and YMYHIVEVSLMFMLLIYV.

It localises to the cell membrane. This is an uncharacterized protein from Bacillus subtilis (strain 168).